A 100-amino-acid polypeptide reads, in one-letter code: Cell division protein FtsB (100 aa).

Residues 1–3 are Cytoplasmic-facing; the sequence is MKQ. The helical transmembrane segment at 4-21 threads the bilayer; the sequence is LIFLLICLLSLLQYRLWL. At 22–100 the chain is on the periplasmic side; the sequence is GDNNLSEYVL…ELRERNPFNR (79 aa). The stretch at 49–73 forms a coiled coil; the sequence is RNQILKEEIIDLKRGTEAIEERARN.

Belongs to the FtsB family. As to quaternary structure, part of a complex composed of FtsB, FtsL and FtsQ.

It is found in the cell inner membrane. Functionally, essential cell division protein. May link together the upstream cell division proteins, which are predominantly cytoplasmic, with the downstream cell division proteins, which are predominantly periplasmic. This chain is Cell division protein FtsB, found in Shewanella frigidimarina (strain NCIMB 400).